The chain runs to 464 residues: A-type ATP synthase subunit B (464 aa).

The protein belongs to the ATPase alpha/beta chains family. Has multiple subunits with at least A(3), B(3), C, D, E, F, H, I and proteolipid K(x).

Its subcellular location is the cell membrane. Component of the A-type ATP synthase that produces ATP from ADP in the presence of a proton gradient across the membrane. The B chain is a regulatory subunit. This chain is A-type ATP synthase subunit B, found in Methanococcus aeolicus (strain ATCC BAA-1280 / DSM 17508 / OCM 812 / Nankai-3).